The following is a 408-amino-acid chain: 1-deoxy-D-xylulose 5-phosphate reductoisomerase (408 aa).

The NADPH site is built by threonine 26, glycine 27, serine 28, isoleucine 29, and asparagine 143. A 1-deoxy-D-xylulose 5-phosphate-binding site is contributed by lysine 144. Glutamate 145 lines the NADPH pocket. Residue aspartate 167 participates in Mn(2+) binding. 4 residues coordinate 1-deoxy-D-xylulose 5-phosphate: serine 168, glutamate 169, serine 193, and histidine 216. Residue glutamate 169 coordinates Mn(2+). Glycine 222 is a binding site for NADPH. 1-deoxy-D-xylulose 5-phosphate-binding residues include serine 229, asparagine 234, lysine 235, and glutamate 238. Residue glutamate 238 coordinates Mn(2+).

The protein belongs to the DXR family. The cofactor is Mg(2+). Mn(2+) serves as cofactor.

It carries out the reaction 2-C-methyl-D-erythritol 4-phosphate + NADP(+) = 1-deoxy-D-xylulose 5-phosphate + NADPH + H(+). It participates in isoprenoid biosynthesis; isopentenyl diphosphate biosynthesis via DXP pathway; isopentenyl diphosphate from 1-deoxy-D-xylulose 5-phosphate: step 1/6. Functionally, catalyzes the NADPH-dependent rearrangement and reduction of 1-deoxy-D-xylulose-5-phosphate (DXP) to 2-C-methyl-D-erythritol 4-phosphate (MEP). The chain is 1-deoxy-D-xylulose 5-phosphate reductoisomerase from Corynebacterium jeikeium (strain K411).